The primary structure comprises 251 residues: Ubiquinone/menaquinone biosynthesis C-methyltransferase UbiE (251 aa).

S-adenosyl-L-methionine is bound by residues Thr-74, Asp-95, and 123–124 (NA).

Belongs to the class I-like SAM-binding methyltransferase superfamily. MenG/UbiE family.

The catalysed reaction is a 2-demethylmenaquinol + S-adenosyl-L-methionine = a menaquinol + S-adenosyl-L-homocysteine + H(+). The enzyme catalyses a 2-methoxy-6-(all-trans-polyprenyl)benzene-1,4-diol + S-adenosyl-L-methionine = a 5-methoxy-2-methyl-3-(all-trans-polyprenyl)benzene-1,4-diol + S-adenosyl-L-homocysteine + H(+). The protein operates within quinol/quinone metabolism; menaquinone biosynthesis; menaquinol from 1,4-dihydroxy-2-naphthoate: step 2/2. It participates in cofactor biosynthesis; ubiquinone biosynthesis. Its function is as follows. Methyltransferase required for the conversion of demethylmenaquinol (DMKH2) to menaquinol (MKH2) and the conversion of 2-polyprenyl-6-methoxy-1,4-benzoquinol (DDMQH2) to 2-polyprenyl-3-methyl-6-methoxy-1,4-benzoquinol (DMQH2). In Edwardsiella ictaluri (strain 93-146), this protein is Ubiquinone/menaquinone biosynthesis C-methyltransferase UbiE.